The chain runs to 132 residues: Small ribosomal subunit protein uS8 (132 aa).

The protein belongs to the universal ribosomal protein uS8 family. As to quaternary structure, part of the 30S ribosomal subunit. Contacts proteins S5 and S12.

Functionally, one of the primary rRNA binding proteins, it binds directly to 16S rRNA central domain where it helps coordinate assembly of the platform of the 30S subunit. The protein is Small ribosomal subunit protein uS8 of Bartonella quintana (strain Toulouse) (Rochalimaea quintana).